A 61-amino-acid chain; its full sequence is Small ribosomal subunit protein uS14 (61 aa).

Zn(2+)-binding residues include cysteine 24, cysteine 27, cysteine 40, and cysteine 43.

The protein belongs to the universal ribosomal protein uS14 family. Zinc-binding uS14 subfamily. Part of the 30S ribosomal subunit. Contacts proteins S3 and S10. Zn(2+) serves as cofactor.

Binds 16S rRNA, required for the assembly of 30S particles and may also be responsible for determining the conformation of the 16S rRNA at the A site. In Trichlorobacter lovleyi (strain ATCC BAA-1151 / DSM 17278 / SZ) (Geobacter lovleyi), this protein is Small ribosomal subunit protein uS14.